Reading from the N-terminus, the 37-residue chain is Large ribosomal subunit protein bL36 (37 aa).

The protein belongs to the bacterial ribosomal protein bL36 family.

This Caldicellulosiruptor saccharolyticus (strain ATCC 43494 / DSM 8903 / Tp8T 6331) protein is Large ribosomal subunit protein bL36.